We begin with the raw amino-acid sequence, 1226 residues long: 3-hydroxy-3-methylglutaryl-coenzyme A reductase (1226 aa).

Helical transmembrane passes span Ile-17–Gly-37, Ile-224–Ala-244, Phe-252–Met-272, Val-337–Asn-357, and Leu-373–Val-393. One can recognise an SSD domain in the interval Asp-223 to Ile-391. The tract at residues Leu-428–Arg-449 is disordered. Positions Lys-434–Asn-445 are enriched in polar residues. A helical transmembrane segment spans residues Leu-481 to Ser-501. Disordered regions lie at residues Ala-683–Leu-702 and Leu-722–Pro-742. A compositionally biased stretch (pro residues) spans Ala-685–Leu-702. Catalysis depends on Glu-869, which acts as the Charge relay system. Residue Ser-875–Lys-881 coordinates CoA. Residues Ser-936–Phe-938 and Asp-963–Ser-971 contribute to the NADP(+) site. Lys-1001 (charge relay system) is an active-site residue. Val-1030 to Lys-1032 contacts CoA. Catalysis depends on Asp-1077, which acts as the Charge relay system. Residues Ile-1150–His-1170 traverse the membrane as a helical segment. Residue Ala-1174 to His-1175 participates in CoA binding. His-1175 serves as the catalytic Proton donor. An NADP(+)-binding site is contributed by Asn-1179–Arg-1180. A disordered region spans residues Gln-1182 to Lys-1226. Residues His-1201–Ala-1210 show a composition bias toward polar residues.

This sequence belongs to the HMG-CoA reductase family.

Its subcellular location is the endoplasmic reticulum membrane. The catalysed reaction is (R)-mevalonate + 2 NADP(+) + CoA = (3S)-3-hydroxy-3-methylglutaryl-CoA + 2 NADPH + 2 H(+). Its pathway is metabolic intermediate biosynthesis; (R)-mevalonate biosynthesis; (R)-mevalonate from acetyl-CoA: step 3/3. In terms of biological role, HMG-CoA reductase; part of the first module of ergosterol biosynthesis pathway that includes the early steps of the pathway, conserved across all eukaryotes, and which results in the formation of mevalonate from acetyl-coenzyme A (acetyl-CoA). This module also plays a key role in the biosynthesis of triterpenes such as ganoderic acids (GA), a group of highly oxygenated lanostane-type triterpenoids which are well recognized as a main group of unique bioactive compounds in the medicinal mushroom Ganoderma lucidum. In this module, the acetyl-CoA acetyltransferase catalyzes the formation of acetoacetyl-CoA. The hydroxymethylglutaryl-CoA synthase HMGS then condenses acetyl-CoA with acetoacetyl-CoA to form HMG-CoA. The rate-limiting step of the early module is the reduction to mevalonate by the 3-hydroxy-3-methylglutaryl-coenzyme A (HMG-CoA) reductase. This Ganoderma lucidum (Ling zhi medicinal fungus) protein is 3-hydroxy-3-methylglutaryl-coenzyme A reductase.